A 138-amino-acid polypeptide reads, in one-letter code: Large ribosomal subunit protein uL16 (138 aa).

Over residues 1–17 (MLQPKRTKFRKQHKGRN) the composition is skewed to basic residues. Positions 1-22 (MLQPKRTKFRKQHKGRNRGVAT) are disordered.

Belongs to the universal ribosomal protein uL16 family. Part of the 50S ribosomal subunit.

In terms of biological role, binds 23S rRNA and is also seen to make contacts with the A and possibly P site tRNAs. The polypeptide is Large ribosomal subunit protein uL16 (Acidithiobacillus ferrooxidans (strain ATCC 23270 / DSM 14882 / CIP 104768 / NCIMB 8455) (Ferrobacillus ferrooxidans (strain ATCC 23270))).